The sequence spans 156 residues: 6,7-dimethyl-8-ribityllumazine synthase (156 aa).

Residues Phe-23, 57-59 (AFE), and 81-83 (AVI) contribute to the 5-amino-6-(D-ribitylamino)uracil site. A (2S)-2-hydroxy-3-oxobutyl phosphate-binding site is contributed by 86–87 (ST). The active-site Proton donor is the His-89. Phe-114 provides a ligand contact to 5-amino-6-(D-ribitylamino)uracil. (2S)-2-hydroxy-3-oxobutyl phosphate is bound at residue Arg-128.

This sequence belongs to the DMRL synthase family.

It catalyses the reaction (2S)-2-hydroxy-3-oxobutyl phosphate + 5-amino-6-(D-ribitylamino)uracil = 6,7-dimethyl-8-(1-D-ribityl)lumazine + phosphate + 2 H2O + H(+). The protein operates within cofactor biosynthesis; riboflavin biosynthesis; riboflavin from 2-hydroxy-3-oxobutyl phosphate and 5-amino-6-(D-ribitylamino)uracil: step 1/2. In terms of biological role, catalyzes the formation of 6,7-dimethyl-8-ribityllumazine by condensation of 5-amino-6-(D-ribitylamino)uracil with 3,4-dihydroxy-2-butanone 4-phosphate. This is the penultimate step in the biosynthesis of riboflavin. The sequence is that of 6,7-dimethyl-8-ribityllumazine synthase from Campylobacter curvus (strain 525.92).